The following is a 576-amino-acid chain: Arginine--tRNA ligase (576 aa).

The short motif at 126 to 136 (ANPTGPMHIGH) is the 'HIGH' region element.

The protein belongs to the class-I aminoacyl-tRNA synthetase family. Monomer.

Its subcellular location is the cytoplasm. The catalysed reaction is tRNA(Arg) + L-arginine + ATP = L-arginyl-tRNA(Arg) + AMP + diphosphate. The chain is Arginine--tRNA ligase from Rickettsia rickettsii (strain Iowa).